The primary structure comprises 205 residues: Protein phosphatase inhibitor 2 (205 aa).

Disordered regions lie at residues 1 to 46 (MAAS…KSQK) and 64 to 205 (GLMK…SQSS). An N-acetylalanine modification is found at alanine 2. Required for binding PPP1CC stretches follow at residues 12–17 (KGILKN) and 43–55 (KSQK…ILAT). Residues 17 to 26 (NKTSSTSSRV) show a composition bias toward polar residues. Residues 35–46 (SVDEELSKKSQK) are compositionally biased toward basic and acidic residues. Serine 44 bears the Phosphoserine; by ATM mark. A Phosphothreonine; by GSK3 modification is found at threonine 73. Acidic residues predominate over residues 80–91 (GDDDDAYSDTET). At serine 87 the chain carries Phosphoserine. A phosphothreonine mark is found at threonine 89, threonine 92, and threonine 96. Residues 110–120 (SEPKYRIREQE) are compositionally biased toward basic and acidic residues. 4 positions are modified to phosphoserine: serine 121, serine 122, serine 127, and serine 130. Residues 121-130 (SSGEEDSDLS) show a composition bias toward acidic residues. Basic and acidic residues predominate over residues 131-143 (PEEREKKRQFEMK). A required for binding PPP1CC catalytic center, displacing metal ions and inhibition of PPP1CC catalytic activity region spans residues 147 to 150 (HYNE). Positions 167-179 (DDEEDEEMSETAD) are enriched in acidic residues. Positions 182–205 (SMNTEESNQGSTPSDQRQNKSQSS) are enriched in polar residues.

It belongs to the protein phosphatase inhibitor 2 family. As to quaternary structure, heterodimer with PP1. Post-translationally, phosphorylation on Ser-44 by ATM activates PP1 by dissociating the PP1-PPP1R2 complex. Phosphorylation on Thr-73 by GSK3 activates PP1 by dissociating the PP1-PPP1R2 complex.

In terms of biological role, inhibitor of protein-phosphatase 1. In Oryctolagus cuniculus (Rabbit), this protein is Protein phosphatase inhibitor 2 (PPP1R2).